The chain runs to 194 residues: Ion-translocating oxidoreductase complex subunit B (194 aa).

Residues 1-26 (MSGVLIAVAALLALAAVFGAVLGFAS) are hydrophobic. The 4Fe-4S domain maps to 32–90 (EGDPIVDQIDSLLPQTQCGQCGHPGCRPYAEAIAEGEEHNRCPPGGQDTVVALSELLGR). Residues cysteine 49, cysteine 52, cysteine 57, cysteine 73, cysteine 116, cysteine 119, cysteine 122, cysteine 126, cysteine 146, cysteine 149, cysteine 152, and cysteine 156 each coordinate [4Fe-4S] cluster. 4Fe-4S ferredoxin-type domains lie at 107-136 (KVAYIREDECIGCTKCIQACPVDAIVGAAK) and 137-166 (LMHTVIVDECTGCDLCVEPCPVDCIDMLEV).

It belongs to the 4Fe4S bacterial-type ferredoxin family. RnfB subfamily. The complex is composed of six subunits: RnfA, RnfB, RnfC, RnfD, RnfE and RnfG. It depends on [4Fe-4S] cluster as a cofactor.

It is found in the cell inner membrane. Its function is as follows. Part of a membrane-bound complex that couples electron transfer with translocation of ions across the membrane. The sequence is that of Ion-translocating oxidoreductase complex subunit B from Alcanivorax borkumensis (strain ATCC 700651 / DSM 11573 / NCIMB 13689 / SK2).